Reading from the N-terminus, the 120-residue chain is MFSDLCDAGLLESLCLMRMCRHLTRTGWSLKCLCSWSLLVPSGSSHCECFVSGLKKYSLFLDLLYLTVHGVGSPVLDATSDGIGASLWCRSRLCVGISTTMIIQVLFLLRSKGKRYDTRS.

The helical transmembrane segment at 93 to 109 (LCVGISTTMIIQVLFLL) threads the bilayer.

Its subcellular location is the membrane. This is an uncharacterized protein from Saccharomyces cerevisiae (strain ATCC 204508 / S288c) (Baker's yeast).